The chain runs to 249 residues: 4-hydroxy-tetrahydrodipicolinate reductase (249 aa).

NAD(+)-binding positions include 77–79 and 101–104; these read ATT and SYNT. H133 functions as the Proton donor/acceptor in the catalytic mechanism. H134 is a binding site for (S)-2,3,4,5-tetrahydrodipicolinate. K137 acts as the Proton donor in catalysis. 143–144 serves as a coordination point for (S)-2,3,4,5-tetrahydrodipicolinate; it reads GT.

It belongs to the DapB family.

The protein localises to the cytoplasm. The catalysed reaction is (S)-2,3,4,5-tetrahydrodipicolinate + NAD(+) + H2O = (2S,4S)-4-hydroxy-2,3,4,5-tetrahydrodipicolinate + NADH + H(+). It carries out the reaction (S)-2,3,4,5-tetrahydrodipicolinate + NADP(+) + H2O = (2S,4S)-4-hydroxy-2,3,4,5-tetrahydrodipicolinate + NADPH + H(+). Its pathway is amino-acid biosynthesis; L-lysine biosynthesis via DAP pathway; (S)-tetrahydrodipicolinate from L-aspartate: step 4/4. Catalyzes the conversion of 4-hydroxy-tetrahydrodipicolinate (HTPA) to tetrahydrodipicolinate. In Exiguobacterium sp. (strain ATCC BAA-1283 / AT1b), this protein is 4-hydroxy-tetrahydrodipicolinate reductase.